Consider the following 274-residue polypeptide: Probable eukaryotic translation initiation factor 3 subunit J (274 aa).

2 disordered regions span residues 1–110 and 207–245; these read MDSW…KEAM and KEQQEKTQSKRGAAAPAAKPVSTAAPSKKGGKPTVNVNS. Residues 38-47 are compositionally biased toward acidic residues; it reads DEEDEDEEEN. Residues 52-73 are compositionally biased toward low complexity; the sequence is QNDSHSVSQKSSSSSQNDQGSN. The segment covering 82–110 has biased composition (basic and acidic residues); sequence IQERNFEKAIKASEAAAKEESLESSKEAM. Over residues 219-234 the composition is skewed to low complexity; that stretch reads AAAPAAKPVSTAAPSK.

Belongs to the eIF-3 subunit J family. In terms of assembly, component of the eukaryotic translation initiation factor 3 (eIF-3) complex. The eIF-3 complex appears to include tif32/eif3a, SPAC25G10.08/eif3b, tif33/eif3c, SPBC4C3.07/eif3f, tif35/eif3g and sum1/eif3i. This set of common subunits may also associate exclusively with either moe1/eif3d and int6/eif3e, or with SPAC821.05/eif3h and SPAC1751.03/eif3m. The eIF-3 complex may also include SPAC3A12.13c/eif3j. Interacts with sad1.

Its subcellular location is the cytoplasm. Its function is as follows. Component of the eukaryotic translation initiation factor 3 (eIF-3) complex, which is involved in protein synthesis of a specialized repertoire of mRNAs and, together with other initiation factors, stimulates binding of mRNA and methionyl-tRNAi to the 40S ribosome. The eIF-3 complex specifically targets and initiates translation of a subset of mRNAs involved in cell proliferation. In Schizosaccharomyces pombe (strain 972 / ATCC 24843) (Fission yeast), this protein is Probable eukaryotic translation initiation factor 3 subunit J.